Here is a 103-residue protein sequence, read N- to C-terminus: MNNSEFSKIAETTIAYIAEKIEEQDKEASIDVDLQGDILNLDTDKGVYVINKQSAAKEIWLSSPVSGPYHFFYEQGEWTNRAGLELMAILTEELNIKFDTRPT.

This sequence belongs to the frataxin family.

Involved in iron-sulfur (Fe-S) cluster assembly. May act as a regulator of Fe-S biogenesis. The polypeptide is Iron-sulfur cluster assembly protein CyaY (Rickettsia africae (strain ESF-5)).